A 643-amino-acid polypeptide reads, in one-letter code: tRNA 5-methylaminomethyl-2-thiouridine biosynthesis bifunctional protein MnmC (643 aa).

The tRNA (mnm(5)s(2)U34)-methyltransferase stretch occupies residues 1–223; sequence MPDRLVSATL…VDDRLVGDYA (223 aa). The interval 247-643 is FAD-dependent cmnm(5)s(2)U34 oxidoreductase; that stretch reads IGAGLAGCAV…LRARRVGSAG (397 aa).

The protein in the N-terminal section; belongs to the methyltransferase superfamily. tRNA (mnm(5)s(2)U34)-methyltransferase family. It in the C-terminal section; belongs to the DAO family. It depends on FAD as a cofactor.

It is found in the cytoplasm. It catalyses the reaction 5-aminomethyl-2-thiouridine(34) in tRNA + S-adenosyl-L-methionine = 5-methylaminomethyl-2-thiouridine(34) in tRNA + S-adenosyl-L-homocysteine + H(+). Functionally, catalyzes the last two steps in the biosynthesis of 5-methylaminomethyl-2-thiouridine (mnm(5)s(2)U) at the wobble position (U34) in tRNA. Catalyzes the FAD-dependent demodification of cmnm(5)s(2)U34 to nm(5)s(2)U34, followed by the transfer of a methyl group from S-adenosyl-L-methionine to nm(5)s(2)U34, to form mnm(5)s(2)U34. The polypeptide is tRNA 5-methylaminomethyl-2-thiouridine biosynthesis bifunctional protein MnmC (Burkholderia cenocepacia (strain HI2424)).